The sequence spans 318 residues: Dihydroorotate dehydrogenase B (NAD(+)), catalytic subunit (318 aa).

Residues serine 19 and 43–44 each bind FMN; that span reads KT. Residues lysine 43, 69–73, and asparagine 125 contribute to the substrate site; that span reads NAMGL. Asparagine 125 is a binding site for FMN. Cysteine 128 acts as the Nucleophile in catalysis. Residues lysine 164 and valine 192 each coordinate FMN. 193-194 contacts substrate; that stretch reads NT. FMN-binding positions include glycine 219, 247–248, and 269–270; these read GG and AT.

It belongs to the dihydroorotate dehydrogenase family. Type 1 subfamily. In terms of assembly, heterotetramer of 2 PyrK and 2 PyrD type B subunits. The cofactor is FMN.

Its subcellular location is the cytoplasm. The catalysed reaction is (S)-dihydroorotate + NAD(+) = orotate + NADH + H(+). It functions in the pathway pyrimidine metabolism; UMP biosynthesis via de novo pathway; orotate from (S)-dihydroorotate (NAD(+) route): step 1/1. Functionally, catalyzes the conversion of dihydroorotate to orotate with NAD(+) as electron acceptor. In Methanopyrus kandleri (strain AV19 / DSM 6324 / JCM 9639 / NBRC 100938), this protein is Dihydroorotate dehydrogenase B (NAD(+)), catalytic subunit (pyrD).